Consider the following 216-residue polypeptide: Pyridoxine/pyridoxamine 5'-phosphate oxidase (216 aa).

Substrate contacts are provided by residues 12-15 and Lys-70; that span reads RREY. FMN contacts are provided by residues 65–70, 80–81, Arg-86, Lys-87, and Gln-109; these read RLVLLK and YT. Positions 127, 131, and 135 each coordinate substrate. Residues 144 to 145 and Trp-189 each bind FMN; that span reads QS. Position 195 to 197 (195 to 197) interacts with substrate; it reads RMH. Residue Arg-199 participates in FMN binding.

Belongs to the pyridoxamine 5'-phosphate oxidase family. As to quaternary structure, homodimer. The cofactor is FMN.

It carries out the reaction pyridoxamine 5'-phosphate + O2 + H2O = pyridoxal 5'-phosphate + H2O2 + NH4(+). The catalysed reaction is pyridoxine 5'-phosphate + O2 = pyridoxal 5'-phosphate + H2O2. Its pathway is cofactor metabolism; pyridoxal 5'-phosphate salvage; pyridoxal 5'-phosphate from pyridoxamine 5'-phosphate: step 1/1. The protein operates within cofactor metabolism; pyridoxal 5'-phosphate salvage; pyridoxal 5'-phosphate from pyridoxine 5'-phosphate: step 1/1. Catalyzes the oxidation of either pyridoxine 5'-phosphate (PNP) or pyridoxamine 5'-phosphate (PMP) into pyridoxal 5'-phosphate (PLP). The polypeptide is Pyridoxine/pyridoxamine 5'-phosphate oxidase (Sodalis glossinidius (strain morsitans)).